A 456-amino-acid polypeptide reads, in one-letter code: tRNA modification GTPase MnmE (456 aa).

Residues arginine 24, glutamate 81, and lysine 120 each contribute to the (6S)-5-formyl-5,6,7,8-tetrahydrofolate site. The 164-residue stretch at 216 to 379 folds into the TrmE-type G domain; it reads GMTVVIAGRP…LREHLKACMG (164 aa). Asparagine 226 provides a ligand contact to K(+). Residues 226-231, 245-251, 270-273, 335-338, and 359-361 each bind GTP; these read NAGKSS, TEIAGTT, DTAG, NKAD, and SAR. Mg(2+) is bound at residue serine 230. Threonine 245, isoleucine 247, and threonine 250 together coordinate K(+). Threonine 251 provides a ligand contact to Mg(2+). Lysine 456 contacts (6S)-5-formyl-5,6,7,8-tetrahydrofolate.

This sequence belongs to the TRAFAC class TrmE-Era-EngA-EngB-Septin-like GTPase superfamily. TrmE GTPase family. Homodimer. Heterotetramer of two MnmE and two MnmG subunits. Requires K(+) as cofactor.

Its subcellular location is the cytoplasm. Its function is as follows. Exhibits a very high intrinsic GTPase hydrolysis rate. Involved in the addition of a carboxymethylaminomethyl (cmnm) group at the wobble position (U34) of certain tRNAs, forming tRNA-cmnm(5)s(2)U34. In Pseudomonas syringae pv. syringae (strain B728a), this protein is tRNA modification GTPase MnmE.